The sequence spans 208 residues: ATP-dependent Clp protease proteolytic subunit (208 aa).

Catalysis depends on S111, which acts as the Nucleophile. The active site involves H136.

It belongs to the peptidase S14 family. Fourteen ClpP subunits assemble into 2 heptameric rings which stack back to back to give a disk-like structure with a central cavity, resembling the structure of eukaryotic proteasomes.

Its subcellular location is the cytoplasm. It catalyses the reaction Hydrolysis of proteins to small peptides in the presence of ATP and magnesium. alpha-casein is the usual test substrate. In the absence of ATP, only oligopeptides shorter than five residues are hydrolyzed (such as succinyl-Leu-Tyr-|-NHMec, and Leu-Tyr-Leu-|-Tyr-Trp, in which cleavage of the -Tyr-|-Leu- and -Tyr-|-Trp bonds also occurs).. Its function is as follows. Cleaves peptides in various proteins in a process that requires ATP hydrolysis. Has a chymotrypsin-like activity. Plays a major role in the degradation of misfolded proteins. This chain is ATP-dependent Clp protease proteolytic subunit, found in Vibrio campbellii (strain ATCC BAA-1116).